The sequence spans 513 residues: Bifunctional purine biosynthesis protein PurH (513 aa).

The 144-residue stretch at 1 to 144 (MKRALISVSD…KNYQDVTVVT (144 aa)) folds into the MGS-like domain.

Belongs to the PurH family.

It carries out the reaction (6R)-10-formyltetrahydrofolate + 5-amino-1-(5-phospho-beta-D-ribosyl)imidazole-4-carboxamide = 5-formamido-1-(5-phospho-D-ribosyl)imidazole-4-carboxamide + (6S)-5,6,7,8-tetrahydrofolate. It catalyses the reaction IMP + H2O = 5-formamido-1-(5-phospho-D-ribosyl)imidazole-4-carboxamide. The protein operates within purine metabolism; IMP biosynthesis via de novo pathway; 5-formamido-1-(5-phospho-D-ribosyl)imidazole-4-carboxamide from 5-amino-1-(5-phospho-D-ribosyl)imidazole-4-carboxamide (10-formyl THF route): step 1/1. It functions in the pathway purine metabolism; IMP biosynthesis via de novo pathway; IMP from 5-formamido-1-(5-phospho-D-ribosyl)imidazole-4-carboxamide: step 1/1. The chain is Bifunctional purine biosynthesis protein PurH from Lactobacillus acidophilus (strain ATCC 700396 / NCK56 / N2 / NCFM).